The chain runs to 226 residues: Glycerol-3-phosphate acyltransferase (226 aa).

6 helical membrane passes run 1-21 (MGLWLSLCGAVVVVAYLLGSF), 56-76 (GPGAFVLGLDCLKGVLAIALV), 102-122 (LVTLAGIAAILGHSKSIFLGF), 134-154 (ILLAMNWQVGLATFGVFAVVV), 159-178 (IVSLSSIMGAIAVSIVMVVL), and 182-197 (LPYILFGIAGGLYVIL).

It belongs to the PlsY family. Probably interacts with PlsX.

Its subcellular location is the cell inner membrane. The enzyme catalyses an acyl phosphate + sn-glycerol 3-phosphate = a 1-acyl-sn-glycero-3-phosphate + phosphate. It participates in lipid metabolism; phospholipid metabolism. In terms of biological role, catalyzes the transfer of an acyl group from acyl-phosphate (acyl-PO(4)) to glycerol-3-phosphate (G3P) to form lysophosphatidic acid (LPA). This enzyme utilizes acyl-phosphate as fatty acyl donor, but not acyl-CoA or acyl-ACP. The polypeptide is Glycerol-3-phosphate acyltransferase (Trichormus variabilis (strain ATCC 29413 / PCC 7937) (Anabaena variabilis)).